The chain runs to 306 residues: NAD kinase 1 (306 aa).

Residue Asp67 is the Proton acceptor of the active site. NAD(+) contacts are provided by residues 67 to 68 (DG), 149 to 150 (NE), and Asp181.

It belongs to the NAD kinase family. A divalent metal cation serves as cofactor.

It is found in the cytoplasm. It catalyses the reaction NAD(+) + ATP = ADP + NADP(+) + H(+). In terms of biological role, involved in the regulation of the intracellular balance of NAD and NADP, and is a key enzyme in the biosynthesis of NADP. Catalyzes specifically the phosphorylation on 2'-hydroxyl of the adenosine moiety of NAD to yield NADP. This is NAD kinase 1 from Thermosynechococcus vestitus (strain NIES-2133 / IAM M-273 / BP-1).